The chain runs to 277 residues: Large ribosomal subunit protein uL2 (277 aa).

Disordered regions lie at residues 36-55 (PLPK…RHHG) and 213-277 (WKGI…RKKK).

Belongs to the universal ribosomal protein uL2 family. As to quaternary structure, part of the 50S ribosomal subunit. Forms a bridge to the 30S subunit in the 70S ribosome.

Its function is as follows. One of the primary rRNA binding proteins. Required for association of the 30S and 50S subunits to form the 70S ribosome, for tRNA binding and peptide bond formation. It has been suggested to have peptidyltransferase activity; this is somewhat controversial. Makes several contacts with the 16S rRNA in the 70S ribosome. This is Large ribosomal subunit protein uL2 from Staphylococcus saprophyticus subsp. saprophyticus (strain ATCC 15305 / DSM 20229 / NCIMB 8711 / NCTC 7292 / S-41).